A 372-amino-acid polypeptide reads, in one-letter code: Innexin-16 (372 aa).

4 helical membrane-spanning segments follow: residues 31 to 51 (VVTTSILIAFSLLLFAKNYVG), 106 to 126 (VPFLLVIQALFFCVPRAFWII), 181 to 201 (LVMKLLILLNIVLQFFLLNSF), and 263 to 283 (IFIFLWFWFAFLLVATAGDFV). N-linked (GlcNAc...) asparagine glycosylation occurs at Asn352.

It belongs to the pannexin family.

It is found in the cell membrane. It localises to the cell junction. The protein localises to the gap junction. Functionally, structural component of the gap junctions. Required for signals downstream of defecation clock. The chain is Innexin-16 (inx-16) from Caenorhabditis elegans.